The primary structure comprises 157 residues: Protein Smg (157 aa).

The protein belongs to the Smg family.

In Pectobacterium carotovorum subsp. carotovorum (strain PC1), this protein is Protein Smg.